Reading from the N-terminus, the 319-residue chain is Glycine--tRNA ligase alpha subunit (319 aa).

The disordered stretch occupies residues 290 to 319; the sequence is RQQQPEAPAPGPAAVVGGRDRKDACDVKEG. The segment covering 307–319 has biased composition (basic and acidic residues); the sequence is GRDRKDACDVKEG.

It belongs to the class-II aminoacyl-tRNA synthetase family. In terms of assembly, tetramer of two alpha and two beta subunits.

Its subcellular location is the cytoplasm. The catalysed reaction is tRNA(Gly) + glycine + ATP = glycyl-tRNA(Gly) + AMP + diphosphate. This Moorella thermoacetica (strain ATCC 39073 / JCM 9320) protein is Glycine--tRNA ligase alpha subunit.